Consider the following 209-residue polypeptide: Ribosomal RNA large subunit methyltransferase E (209 aa).

5 residues coordinate S-adenosyl-L-methionine: Gly63, Trp65, Asp83, Asp99, and Asp124. The active-site Proton acceptor is the Lys164.

It belongs to the class I-like SAM-binding methyltransferase superfamily. RNA methyltransferase RlmE family.

Its subcellular location is the cytoplasm. It catalyses the reaction uridine(2552) in 23S rRNA + S-adenosyl-L-methionine = 2'-O-methyluridine(2552) in 23S rRNA + S-adenosyl-L-homocysteine + H(+). Specifically methylates the uridine in position 2552 of 23S rRNA at the 2'-O position of the ribose in the fully assembled 50S ribosomal subunit. This is Ribosomal RNA large subunit methyltransferase E from Buchnera aphidicola subsp. Cinara cedri (strain Cc).